The primary structure comprises 234 residues: Large ribosomal subunit protein uL1 (234 aa).

It belongs to the universal ribosomal protein uL1 family. In terms of assembly, part of the 50S ribosomal subunit.

Its function is as follows. Binds directly to 23S rRNA. The L1 stalk is quite mobile in the ribosome, and is involved in E site tRNA release. Protein L1 is also a translational repressor protein, it controls the translation of the L11 operon by binding to its mRNA. The sequence is that of Large ribosomal subunit protein uL1 from Prochlorococcus marinus (strain MIT 9211).